The following is a 309-amino-acid chain: 2-phospho-L-lactate transferase (309 aa).

7,8-didemethyl-8-hydroxy-5-deazariboflavin is bound by residues Asp-50 and Lys-89.

The protein belongs to the CofD family. As to quaternary structure, homodimer. Requires Mg(2+) as cofactor.

The enzyme catalyses (2S)-lactyl-2-diphospho-5'-guanosine + 7,8-didemethyl-8-hydroxy-5-deazariboflavin = oxidized coenzyme F420-0 + GMP + H(+). Its pathway is cofactor biosynthesis; coenzyme F420 biosynthesis. In terms of biological role, catalyzes the transfer of the 2-phospholactate moiety from (2S)-lactyl-2-diphospho-5'-guanosine to 7,8-didemethyl-8-hydroxy-5-deazariboflavin (FO) with the formation of oxidized coenzyme F420-0 and GMP. The polypeptide is 2-phospho-L-lactate transferase (Methanococcus maripaludis (strain C7 / ATCC BAA-1331)).